Consider the following 631-residue polypeptide: Tumor protein p73 (631 aa).

The tract at residues 1-43 (MAQTSSSSSSTFEHLWSSLEPDSTYFDLPQPSQGTSEASGSEE) is transactivation. 2 disordered regions span residues 23–43 (STYF…GSEE) and 69–113 (SRAA…NTDY). Thr-24 carries the phosphothreonine; by PLK1 modification. Tyr-25 is modified (phosphotyrosine; by SRC and HCK). Polar residues-rich tracts occupy residues 30–43 (QPSQ…GSEE) and 86–100 (PTHS…TFDT). Tyr-91 carries the phosphotyrosine; by ABL1 modification. Positions 123-302 (FQQSSTAKSA…DRKADEDHYR (180 aa)) are DNA-binding. Zn(2+) contacts are provided by Cys-186, His-189, Cys-250, and Cys-254. The span at 306–315 (ALNESTTKNG) shows a compositional bias: polar residues. Residues 306–334 (ALNESTTKNGAASKRAFKQSPPAIPALGT) form a disordered region. Positions 337–372 (KKRRHGDEDMFYMHVRGRENFEILMKVKESLELMEL) are interaction with HIPK2. Residues 337–378 (KKRRHGDEDMFYMHVRGRENFEILMKVKESLELMELVPQPLV) are oligomerization. The PPxY motif motif lies at 477–481 (PPPPY). One can recognise an SAM domain in the interval 479–545 (PPYHADPSLV…WRGLQDLKQS (67 aa)). A Glycyl lysine isopeptide (Lys-Gly) (interchain with G-Cter in SUMO); alternate cross-link involves residue Lys-622. Residue Lys-622 forms a Glycyl lysine isopeptide (Lys-Gly) (interchain with G-Cter in SUMO2); alternate linkage.

This sequence belongs to the p53 family. Found in a complex with p53/TP53 and CABLES1. The C-terminal oligomerization domain binds to the ABL1 tyrosine kinase SH3 domain. Interacts with HECW2, HIPK2, RANBP9 and WWOX. Interacts (via SAM domain) with FBXO45 (via B30.2/SPRY domain). Interacts with YAP1 (phosphorylated form). Interacts with HCK (via SH3 domain); this inhibits TP73 activity and degradation. Interacts (via SAM domain) with NQO1; this interaction is NADH-dependent, stabilizes TP73 in response to oxidative stress and protects it from ubiquitin-independent degradation by the 20S proteasome. The cofactor is Zn(2+). Sumoylated on Lys-622, which potentiates proteasomal degradation but does not affect transcriptional activity. In terms of processing, phosphorylation by PLK1 and PLK3 inhibits the transcription regulator activity and pro-apoptotic function. Higher levels of phosphorylation seen in striatal neurons of. mutant huntingtin (htt) transgenic mice. Post-translationally, polyubiquitinated by RCHY1/PIRH2; leading to its degradation by the proteasome. As to expression, found in striatal neurons of mutant huntingtin (htt) transgenic mice (at protein level). Isoform 1 is expressed in the nasal epithelium, the vomeronasal organ, the hippocampus and the hypothalamus.

The protein localises to the nucleus. The protein resides in the cytoplasm. Participates in the apoptotic response to DNA damage. Isoforms containing the transactivation domain are pro-apoptotic, isoforms lacking the domain are anti-apoptotic and block the function of p53 and transactivating p73 isoforms. May be a tumor suppressor protein. Is an activator of FOXJ1 expression, essential for the positive regulation of lung ciliated cell differentiation. In Mus musculus (Mouse), this protein is Tumor protein p73 (Tp73).